The sequence spans 643 residues: Extracellular metalloproteinase 4 (643 aa).

The first 18 residues, 1-18 (MHGLLLAGLLALPLNVLA), serve as a signal peptide directing secretion. Residues 19-254 (HPTESHSSGI…VHSVVDYVSA (236 aa)) constitute a propeptide that is removed on maturation. Residues 47–57 (TKSDAVPKQDD) show a composition bias toward basic and acidic residues. The segment at 47–71 (TKSDAVPKQDDESFTTSSTGDDNVS) is disordered. Residues 60–71 (FTTSSTGDDNVS) are compositionally biased toward polar residues. Residues N271 and N420 are each glycosylated (N-linked (GlcNAc...) asparagine). Position 437 (H437) interacts with Zn(2+). E438 is a catalytic residue. Residue H441 participates in Zn(2+) binding. Residue N510 is glycosylated (N-linked (GlcNAc...) asparagine).

This sequence belongs to the peptidase M36 family. Requires Zn(2+) as cofactor.

It is found in the secreted. In terms of biological role, secreted metalloproteinase probably acting as a virulence factor. This Trichophyton equinum (Horse ringworm fungus) protein is Extracellular metalloproteinase 4 (MEP4).